Here is a 73-residue protein sequence, read N- to C-terminus: Cell division protein ZapB (73 aa).

Positions 3–66 (LELLSQLETK…SWSDKVNGLV (64 aa)) form a coiled coil.

The protein belongs to the ZapB family. Homodimer. The ends of the coiled-coil dimer bind to each other, forming polymers. Interacts with FtsZ.

The protein localises to the cytoplasm. Its function is as follows. Non-essential, abundant cell division factor that is required for proper Z-ring formation. It is recruited early to the divisome by direct interaction with FtsZ, stimulating Z-ring assembly and thereby promoting cell division earlier in the cell cycle. Its recruitment to the Z-ring requires functional FtsA or ZipA. The protein is Cell division protein ZapB of Shewanella frigidimarina (strain NCIMB 400).